The chain runs to 404 residues: Acyl-[acyl-carrier-protein] desaturase 7, chloroplastic (404 aa).

The transit peptide at 1-39 (MAASATTSTLAVTMFGYPNRNCHLKPPATATLRFWRSAA) directs the protein to the chloroplast. Fe cation is bound by residues glutamate 138, glutamate 176, histidine 179, glutamate 229, glutamate 262, and histidine 265.

This sequence belongs to the fatty acid desaturase type 2 family. Homodimer. It depends on Fe(2+) as a cofactor.

Its subcellular location is the plastid. The protein resides in the chloroplast. It functions in the pathway lipid metabolism; fatty acid metabolism. In terms of biological role, introduces a cis double bond in the acyl chain of an acyl-[acyl-carrier protein]. In Oryza sativa subsp. indica (Rice), this protein is Acyl-[acyl-carrier-protein] desaturase 7, chloroplastic.